A 1323-amino-acid chain; its full sequence is Inositol hexakisphosphate and diphosphoinositol-pentakisphosphate kinase (1323 aa).

26–27 (RK) is a substrate binding site. Residues Arg109, Lys162, His169, Arg188, 212-215 (EEFI), and 221-223 (DVK) each bind ATP. 188–189 (RK) contacts substrate. Positions 223 and 237 each coordinate substrate. Residues Asp284 and 296–298 (DVN) each bind ATP. Position 301 to 304 (301 to 304 (SFVK)) interacts with substrate. Residues 355-426 (TTPSGKLAEL…VLELARALVI (72 aa)) form a polyphosphoinositide-binding domain region. 2 stretches are compositionally biased toward polar residues: residues 933–947 (FNLS…SSRS) and 977–992 (VTPT…NDDL). 3 disordered regions span residues 933–1022 (FNLS…SEDD), 1043–1107 (AMAD…GGGK), and 1134–1155 (IVIP…ASER). The span at 993–1006 (SISSNAESTAAEST) shows a compositional bias: low complexity. The span at 1062–1074 (KSMEEGDKPHGEW) shows a compositional bias: basic and acidic residues. Positions 1090–1101 (SNEMESNNESME) are enriched in low complexity.

The protein belongs to the histidine acid phosphatase family. VIP1 subfamily.

It is found in the cytoplasm. The protein localises to the cytosol. The catalysed reaction is 1D-myo-inositol hexakisphosphate + ATP = 1-diphospho-1D-myo-inositol 2,3,4,5,6-pentakisphosphate + ADP. The enzyme catalyses 5-diphospho-1D-myo-inositol 1,2,3,4,6-pentakisphosphate + ATP + H(+) = 1,5-bis(diphospho)-1D-myo-inositol 2,3,4,6-tetrakisphosphate + ADP. Its function is as follows. Bifunctional inositol kinase that acts in concert with the IP6K kinases to synthesize the diphosphate group-containing inositol pyrophosphates diphosphoinositol pentakisphosphate, PP-InsP5, and bis-diphosphoinositol tetrakisphosphate, (PP)2-InsP4. PP-InsP5 and (PP)2-InsP4, also respectively called InsP7 and InsP8, may regulate a variety of cellular processes, including apoptosis, vesicle trafficking, cytoskeletal dynamics, and exocytosis. Phosphorylates inositol hexakisphosphate (InsP6) at position 1 to produce PP-InsP5 which is in turn phosphorylated by IP6Ks to produce (PP)2-InsP4. Alternatively, phosphorylates PP-InsP5 at position 1, produced by IP6Ks from InsP6, to produce (PP)2-InsP4. The chain is Inositol hexakisphosphate and diphosphoinositol-pentakisphosphate kinase from Caenorhabditis elegans.